Here is a 277-residue protein sequence, read N- to C-terminus: Caspase-3 (277 aa).

M1 carries the post-translational modification N-acetylmethionine. Propeptides lie at residues 1 to 9 and 10 to 28; these read MENNETSVD and AKSI…KSMD. Position 11 is an N6-acetyllysine (K11). S26 is subject to Phosphoserine. Residues H121 and C163 contribute to the active site. At C163 the chain carries S-nitrosocysteine; in inhibited form.

It belongs to the peptidase C14A family. Heterotetramer that consists of two anti-parallel arranged heterodimers, each one formed by a 17 kDa (p17) and a 12 kDa (p12) subunit. Interacts with BIRC6/bruce. Cleavage by granzyme B, caspase-6, caspase-8 and caspase-10 generates the two active subunits. Additional processing of the propeptides is likely due to the autocatalytic activity of the activated protease. Active heterodimers between the small subunit of caspase-7 protease and the large subunit of caspase-3 also occur and vice versa. Post-translationally, S-nitrosylated on its catalytic site cysteine in unstimulated cell lines and denitrosylated upon activation of the Fas apoptotic pathway, associated with an increase in intracellular caspase activity. Fas therefore activates caspase-3 not only by inducing the cleavage of the caspase zymogen to its active subunits, but also by stimulating the denitrosylation of its active site thiol. In terms of processing, ubiquitinated by BIRC6; this activity is inhibited by DIABLO/SMAC.

It is found in the cytoplasm. It carries out the reaction Strict requirement for an Asp residue at positions P1 and P4. It has a preferred cleavage sequence of Asp-Xaa-Xaa-Asp-|- with a hydrophobic amino-acid residue at P2 and a hydrophilic amino-acid residue at P3, although Val or Ala are also accepted at this position.. Inhibited by BIRC6; following inhibition of BIRC6-caspase binding by DIABLO/SMAC, BIRC6 is subjected to caspase cleavage, leading to an increase in active caspases. In terms of biological role, involved in the activation cascade of caspases responsible for apoptosis execution. At the onset of apoptosis, it proteolytically cleaves poly(ADP-ribose) polymerase PARP1 at a '216-Asp-|-Gly-217' bond. Cleaves and activates sterol regulatory element binding proteins (SREBPs) between the basic helix-loop-helix leucine zipper domain and the membrane attachment domain. Cleaves and activates caspase-6, -7 and -9 (CASP6, CASP7 and CASP9, respectively). Cleaves and inactivates interleukin-18 (IL18). Triggers cell adhesion in sympathetic neurons through RET cleavage. Cleaves IL-1 beta between an Asp and an Ala, releasing the mature cytokine which is involved in a variety of inflammatory processes. Cleaves and inhibits serine/threonine-protein kinase AKT1 in response to oxidative stress. Acts as an inhibitor of type I interferon production during virus-induced apoptosis by mediating cleavage of antiviral proteins CGAS, IRF3 and MAVS, thereby preventing cytokine overproduction. Also involved in pyroptosis by mediating cleavage and activation of gasdermin-E (GSDME). Cleaves XRCC4 and phospholipid scramblase proteins XKR4, XKR8 and XKR9, leading to promote phosphatidylserine exposure on apoptotic cell surface. Cleaves BIRC6 following inhibition of BIRC6-caspase binding by DIABLO/SMAC. This Oryctolagus cuniculus (Rabbit) protein is Caspase-3 (CASP3).